The chain runs to 564 residues: Kelch-like protein 12 (564 aa).

The BTB domain maps to 29–96; that stretch reads CDVTLRVNLK…VYTETVHVTV (68 aa). One can recognise a BACK domain in the interval 131–232; it reads CLGIRDFAET…LTPRYITDVI (102 aa). 6 Kelch repeats span residues 278-325, 327-375, 376-422, 423-469, 471-516, and 518-563; these read VLLV…SLGD, VYVI…TLGD, MIYV…VANG, VIYC…LLND, IYVV…VLRG, and LYAI…VLRE.

Component of the BCR(KLHL12) E3 ubiquitin ligase complex.

Its subcellular location is the cytoplasmic vesicle. It is found in the COPII-coated vesicle. It participates in protein modification; protein ubiquitination. In terms of biological role, substrate-specific adapter of a BCR (BTB-CUL3-RBX1) E3 ubiquitin ligase complex that acts as a negative regulator of Wnt signaling pathway and ER-Golgi transport. The BCR(KLHL12) complex is involved in ER-Golgi transport by regulating the size of COPII coats, thereby playing a key role in collagen export, which is required for embryonic stem (ES) cells division. The polypeptide is Kelch-like protein 12 (klhl12) (Xenopus laevis (African clawed frog)).